The following is a 265-amino-acid chain: Probable aquaporin TIP3-2 (265 aa).

A run of 2 helical transmembrane segments spans residues 32-52 and 62-82; these read LSEF…VYGL and LGGL…AVAV. Positions 92–94 match the NPA 1 motif; it reads NPA. Transmembrane regions (helical) follow at residues 110 to 130, 151 to 171, and 179 to 199; these read AALY…LLRL, ALLL…ATAV, and DIAP…GGPF. The NPA 2 motif lies at 205 to 207; that stretch reads NPA. The helical transmembrane segment at 223–243 threads the bilayer; that stretch reads WVYWLGPLIGAGMAGALYEFV.

This sequence belongs to the MIP/aquaporin (TC 1.A.8) family. TIP (TC 1.A.8.10) subfamily. As to expression, expressed in leaves and at lower levels in roots.

The protein resides in the vacuole membrane. Aquaporins facilitate the transport of water and small neutral solutes across cell membranes. May be involved in transport from the vacuolar compartment to the cytoplasm. The protein is Probable aquaporin TIP3-2 (TIP3-2) of Oryza sativa subsp. japonica (Rice).